We begin with the raw amino-acid sequence, 152 residues long: Nascent polypeptide-associated complex subunit beta (152 aa).

Disordered stretches follow at residues 19–39 and 125–152; these read IGKGTPRRKVKRAPARSAGDD and NMQKNEKDAEEDDIPDLVAGENFESKVE. A compositionally biased stretch (basic residues) spans 23–32; it reads TPRRKVKRAP. The 66-residue stretch at 36–101 folds into the NAC-A/B domain; that stretch reads AGDDKKLQAT…GEDKELTELV (66 aa).

Belongs to the NAC-beta family. In terms of assembly, part of the nascent polypeptide-associated complex (NAC), consisting of npc-1/egd2 and npc-2/egd1. NAC associates with ribosomes via npc-2/egd1.

The protein localises to the cytoplasm. Its subcellular location is the nucleus. Its function is as follows. Component of the nascent polypeptide-associated complex (NAC), a dynamic component of the ribosomal exit tunnel, protecting the emerging polypeptides from interaction with other cytoplasmic proteins to ensure appropriate nascent protein targeting. The NAC complex also promotes mitochondrial protein import by enhancing productive ribosome interactions with the outer mitochondrial membrane and blocks the inappropriate interaction of ribosomes translating non-secretory nascent polypeptides with translocation sites in the membrane of the endoplasmic reticulum. Npc-2/egd1 may act as a transcription factor that exert a negative effect on the expression of several genes that are transcribed by RNA polymerase II. This is Nascent polypeptide-associated complex subunit beta (npc-2) from Neurospora crassa (strain ATCC 24698 / 74-OR23-1A / CBS 708.71 / DSM 1257 / FGSC 987).